Consider the following 345-residue polypeptide: Aminopeptidase YpdE (345 aa).

A divalent metal cation contacts are provided by His62 and Asp166. Glu198 acts as the Proton acceptor in catalysis. Glu199, Asp221, and His308 together coordinate a divalent metal cation.

The protein belongs to the peptidase M42 family. It depends on Co(2+) as a cofactor. Ni(2+) is required as a cofactor. Mn(2+) serves as cofactor. Requires Cu(2+) as cofactor.

Has a broad aminopeptidase activity on non-blocked peptides by progressively cleaving amino acids off the peptide substrate. Aminopeptidase activity stops at the residue before the first proline in the peptide. Cannot cleave when proline is the first N-terminal residue. The sequence is that of Aminopeptidase YpdE (ypdE) from Escherichia coli (strain K12).